The chain runs to 43 residues: Protein PsbN (43 aa).

A helical membrane pass occupies residues 5–27; it reads TLVAISISGLLVSFTGYALYTAF.

It belongs to the PsbN family.

Its subcellular location is the plastid. The protein localises to the chloroplast thylakoid membrane. Its function is as follows. May play a role in photosystem I and II biogenesis. This chain is Protein PsbN, found in Houttuynia cordata (Chameleon plant).